We begin with the raw amino-acid sequence, 392 residues long: Phospho-N-acetylmuramoyl-pentapeptide-transferase (392 aa).

The next 10 membrane-spanning stretches (helical) occupy residues 29-49 (AVMA…FVIR), 76-96 (TMGG…WFDL), 100-120 (FVWI…ADDW), 137-157 (YLWQ…SISE), 193-213 (ISYP…IVGS), 225-245 (GLAI…AYVT), 262-282 (SGEL…FLWF), 289-309 (VFMG…IAVI), 314-334 (IVLA…MMQV), and 369-389 (QVVV…LSTL).

It belongs to the glycosyltransferase 4 family. MraY subfamily. Requires Mg(2+) as cofactor.

The protein localises to the cell inner membrane. The enzyme catalyses UDP-N-acetyl-alpha-D-muramoyl-L-alanyl-gamma-D-glutamyl-meso-2,6-diaminopimeloyl-D-alanyl-D-alanine + di-trans,octa-cis-undecaprenyl phosphate = di-trans,octa-cis-undecaprenyl diphospho-N-acetyl-alpha-D-muramoyl-L-alanyl-D-glutamyl-meso-2,6-diaminopimeloyl-D-alanyl-D-alanine + UMP. Its pathway is cell wall biogenesis; peptidoglycan biosynthesis. Functionally, catalyzes the initial step of the lipid cycle reactions in the biosynthesis of the cell wall peptidoglycan: transfers peptidoglycan precursor phospho-MurNAc-pentapeptide from UDP-MurNAc-pentapeptide onto the lipid carrier undecaprenyl phosphate, yielding undecaprenyl-pyrophosphoryl-MurNAc-pentapeptide, known as lipid I. This is Phospho-N-acetylmuramoyl-pentapeptide-transferase from Polaromonas sp. (strain JS666 / ATCC BAA-500).